We begin with the raw amino-acid sequence, 339 residues long: Probable cytosolic iron-sulfur protein assembly protein CIAO1 (339 aa).

WD repeat units lie at residues 14–53, 59–98, 103–142, 148–187, 192–231, 250–289, and 301–339; these read HPDS…WICK, GHQR…FECV, GHEN…EYEC, SHTQ…WVCC, GHES…NEQG, FHSR…DPQQ, and AHSQ…PEGL. The LYR motif; required for interaction with HSC20 motif lies at 176 to 178; sequence LYR.

The protein belongs to the WD repeat CIA1 family. Component of the CIA complex. Interacts with CIAO2A and forms a complex with CIAO2B and MMS19; the interactions with CIAO2A and CIAO2B are mutually exclusive. Interacts with CHD1L, ERCC2, IREB2 and POLD1. Component of the MMXD complex, which includes CIAO1, ERCC2, CIAO2B, MMS19 and SLC25A5. Interacts with WT1. Interacts with CIAO3. Interacts (via LYR motif) with HSC20.

It localises to the cytoplasm. Its function is as follows. Key component of the cytosolic iron-sulfur protein assembly (CIA) complex, a multiprotein complex that mediates the incorporation of iron-sulfur cluster into extramitochondrial Fe/S proteins. As a CIA complex component, interacts specifically with CIAO2A or CIAO2B and MMS19 to assist different branches of iron-sulfur protein assembly, depending of its interactors. The complex CIAO1:CIAO2B:MMS19 binds to and facilitates the assembly of most cytosolic-nuclear Fe/S proteins. CIAO1:CIAO2A specifically matures ACO1 and stabilizes IREB2. Seems to specifically modulate the transactivation activity of WT1. As part of the mitotic spindle-associated MMXD complex it may play a role in chromosome segregation. The chain is Probable cytosolic iron-sulfur protein assembly protein CIAO1 from Homo sapiens (Human).